The primary structure comprises 303 residues: Crk-like protein (303 aa).

One can recognise an SH2 domain in the interval 14–102 (WYMGPVSRQE…LDTTTLIEPA (89 aa)). Positions 123 to 183 (ENLEYVRTLY…PVPYVEKLVR (61 aa)) constitute an SH3 1 domain. At Y127 the chain carries Phosphotyrosine. The disordered stretch occupies residues 184 to 204 (SSPHGKHGNRNSNSYGIPEPA). Phosphotyrosine is present on Y207. The 62-residue stretch at 235–296 (NGPVFAKAIQ…PFTHVKIFDP (62 aa)) folds into the SH3 2 domain.

Belongs to the CRK family. As to quaternary structure, interacts with INPP5D/SHIP1. Interacts with DOCK2 and EPOR. Interacts with phosphorylated CBLB and IRS4. Interacts with BCAR1/CAS and NEDD9/HEF1.

Its function is as follows. May mediate the transduction of intracellular signals. The protein is Crk-like protein of Rattus norvegicus (Rat).